The following is a 121-amino-acid chain: UPF0344 protein BT9727_1053 (121 aa).

The next 4 membrane-spanning stretches (helical) occupy residues 6 to 26, 38 to 58, 65 to 85, and 92 to 112; these read ITAWALGLILFFVAYSLYSAG, LMYIIIIVTGFMLYMGIMKTA, WYGLKMIAGILVIGGMEMVLV, and ATGAVWGLFIVALVAVFYLGL.

Belongs to the UPF0344 family.

The protein resides in the cell membrane. This is UPF0344 protein BT9727_1053 from Bacillus thuringiensis subsp. konkukian (strain 97-27).